Here is a 197-residue protein sequence, read N- to C-terminus: Lymphotoxin-alpha (197 aa).

Positions 1 to 26 (MTPPGRLYLPLLLGLLLAPPPPGAQG) are cleaved as a signal peptide. Positions 55–197 (PAAHLVGDPS…SSVFFGAFAL (143 aa)) constitute a THD domain. A glycan (N-linked (GlcNAc...) asparagine) is linked at N88. C112 and C148 are oxidised to a cystine.

It belongs to the tumor necrosis factor family. Homotrimer, and heterotrimer of either two LTB and one LTA subunits or (less prevalent) two LTA and one LTB subunits. Interacts with TNFRSF14.

It localises to the secreted. The protein localises to the membrane. Functionally, cytokine that in its homotrimeric form binds to TNFRSF1A/TNFR1, TNFRSF1B/TNFBR and TNFRSF14/HVEM. In its heterotrimeric form with LTB binds to TNFRSF3/LTBR. Lymphotoxin is produced by lymphocytes and is cytotoxic for a wide range of tumor cells in vitro and in vivo. The chain is Lymphotoxin-alpha (LTA) from Oryctolagus cuniculus (Rabbit).